The chain runs to 417 residues: UDP-N-acetylglucosamine 1-carboxyvinyltransferase (417 aa).

Residue K23–N24 coordinates phosphoenolpyruvate. R93 contacts UDP-N-acetyl-alpha-D-glucosamine. The active-site Proton donor is the D117. UDP-N-acetyl-alpha-D-glucosamine-binding residues include D305 and V327.

This sequence belongs to the EPSP synthase family. MurA subfamily.

The protein localises to the cytoplasm. It carries out the reaction phosphoenolpyruvate + UDP-N-acetyl-alpha-D-glucosamine = UDP-N-acetyl-3-O-(1-carboxyvinyl)-alpha-D-glucosamine + phosphate. The protein operates within cell wall biogenesis; peptidoglycan biosynthesis. Cell wall formation. Adds enolpyruvyl to UDP-N-acetylglucosamine. This is UDP-N-acetylglucosamine 1-carboxyvinyltransferase from Mycolicibacterium paratuberculosis (strain ATCC BAA-968 / K-10) (Mycobacterium paratuberculosis).